A 36-amino-acid chain; its full sequence is Photosystem I reaction center subunit VIII (36 aa).

Residues phenylalanine 4–alanine 24 form a helical membrane-spanning segment.

The protein belongs to the PsaI family.

The protein resides in the plastid. It is found in the chloroplast thylakoid membrane. In terms of biological role, may help in the organization of the PsaL subunit. This Piper cenocladum (Ant piper) protein is Photosystem I reaction center subunit VIII.